A 160-amino-acid chain; its full sequence is S-ribosylhomocysteine lyase (160 aa).

Residues H57, H61, and C127 each coordinate Fe cation.

Belongs to the LuxS family. As to quaternary structure, homodimer. Requires Fe cation as cofactor.

It catalyses the reaction S-(5-deoxy-D-ribos-5-yl)-L-homocysteine = (S)-4,5-dihydroxypentane-2,3-dione + L-homocysteine. Involved in the synthesis of autoinducer 2 (AI-2) which is secreted by bacteria and is used to communicate both the cell density and the metabolic potential of the environment. The regulation of gene expression in response to changes in cell density is called quorum sensing. Catalyzes the transformation of S-ribosylhomocysteine (RHC) to homocysteine (HC) and 4,5-dihydroxy-2,3-pentadione (DPD). The protein is S-ribosylhomocysteine lyase of Streptococcus agalactiae serotype V (strain ATCC BAA-611 / 2603 V/R).